The chain runs to 147 residues: Interleukin-4 (147 aa).

The N-terminal stretch at Met-1–Gly-24 is a signal peptide. Cys-47 and Cys-87 form a disulfide bridge. Asn-61, Asn-90, and Asn-117 each carry an N-linked (GlcNAc...) asparagine glycan.

This sequence belongs to the IL-4/IL-13 family.

The protein localises to the secreted. Its function is as follows. Participates in at least several B-cell activation processes as well as of other cell types. It is a costimulator of DNA-synthesis. It induces the expression of class II MHC molecules on resting B-cells. It enhances both secretion and cell surface expression of IgE and IgG1. It also regulates the expression of the low affinity Fc receptor for IgE (CD23) on both lymphocytes and monocytes. Positively regulates IL31RA expression in macrophages. Stimulates autophagy in dendritic cells by interfering with mTORC1 signaling and through the induction of RUFY4. The chain is Interleukin-4 (Il4) from Rattus norvegicus (Rat).